The chain runs to 417 residues: UDP-N-acetylglucosamine 1-carboxyvinyltransferase (417 aa).

22-23 (KN) serves as a coordination point for phosphoenolpyruvate. A UDP-N-acetyl-alpha-D-glucosamine-binding site is contributed by Arg-91. The active-site Proton donor is the Cys-115. Cys-115 carries the 2-(S-cysteinyl)pyruvic acid O-phosphothioketal modification. Residues 120–124 (RPVDQ), Asp-304, and Ile-326 contribute to the UDP-N-acetyl-alpha-D-glucosamine site.

It belongs to the EPSP synthase family. MurA subfamily.

The protein resides in the cytoplasm. It catalyses the reaction phosphoenolpyruvate + UDP-N-acetyl-alpha-D-glucosamine = UDP-N-acetyl-3-O-(1-carboxyvinyl)-alpha-D-glucosamine + phosphate. The protein operates within cell wall biogenesis; peptidoglycan biosynthesis. Cell wall formation. Adds enolpyruvyl to UDP-N-acetylglucosamine. In Desulfovibrio desulfuricans (strain ATCC 27774 / DSM 6949 / MB), this protein is UDP-N-acetylglucosamine 1-carboxyvinyltransferase.